A 734-amino-acid chain; its full sequence is Methylcrotonoyl-CoA carboxylase subunit alpha, mitochondrial (734 aa).

The transit peptide at 1–25 (MSMMTVWALRRNVRRKNHSMLVRYI) directs the protein to the mitochondrion. Positions 37-484 (CIEKILVANR…ETHFIEHHKS (448 aa)) constitute a Biotin carboxylation domain. ATP contacts are provided by K152, E236, and H271. In terms of domain architecture, ATP-grasp spans 156-354 (KRIMGAAGVP…LVEWQIRVAN (199 aa)). Residues E311, E325, and N327 each contribute to the Mn(2+) site. R329 is a catalytic residue. The residue at position 645 (S645) is a Phosphoserine. The disordered stretch occupies residues 645–666 (SEDEEGVQHRTSSETSSHPPGT). One can recognise a Biotinyl-binding domain in the interval 657 to 733 (SETSSHPPGT…SDGSALFRIK (77 aa)). Position 699 is an N6-biotinyllysine (K699).

As to quaternary structure, probably a heterodimer composed of biotin-containing alpha subunits and beta subunits. Biotin is required as a cofactor. Mn(2+) serves as cofactor. In terms of tissue distribution, in roots, cotyledons, leaves, flowers, ovaries, siliques and embryos.

It localises to the mitochondrion matrix. The enzyme catalyses 3-methylbut-2-enoyl-CoA + hydrogencarbonate + ATP = 3-methyl-(2E)-glutaconyl-CoA + ADP + phosphate + H(+). It functions in the pathway amino-acid degradation; L-leucine degradation; (S)-3-hydroxy-3-methylglutaryl-CoA from 3-isovaleryl-CoA: step 2/3. Functionally, biotin-attachment subunit of the 3-methylcrotonyl-CoA carboxylase, an enzyme that catalyzes the conversion of 3-methylcrotonyl-CoA to 3-methylglutaconyl-CoA, a critical step for leucine and isovaleric acid catabolism. In Arabidopsis thaliana (Mouse-ear cress), this protein is Methylcrotonoyl-CoA carboxylase subunit alpha, mitochondrial (MCCA).